Consider the following 268-residue polypeptide: Tryptophan synthase alpha chain (268 aa).

Catalysis depends on proton acceptor residues Glu49 and Asp60.

This sequence belongs to the TrpA family. In terms of assembly, tetramer of two alpha and two beta chains.

It catalyses the reaction (1S,2R)-1-C-(indol-3-yl)glycerol 3-phosphate + L-serine = D-glyceraldehyde 3-phosphate + L-tryptophan + H2O. Its pathway is amino-acid biosynthesis; L-tryptophan biosynthesis; L-tryptophan from chorismate: step 5/5. Its function is as follows. The alpha subunit is responsible for the aldol cleavage of indoleglycerol phosphate to indole and glyceraldehyde 3-phosphate. The chain is Tryptophan synthase alpha chain from Shigella sonnei (strain Ss046).